The chain runs to 403 residues: Phosphopentomutase (403 aa).

Residues Asp13, Asp298, His303, Asp339, His340, and His351 each coordinate Mn(2+).

This sequence belongs to the phosphopentomutase family. Mn(2+) is required as a cofactor.

It localises to the cytoplasm. The catalysed reaction is 2-deoxy-alpha-D-ribose 1-phosphate = 2-deoxy-D-ribose 5-phosphate. It catalyses the reaction alpha-D-ribose 1-phosphate = D-ribose 5-phosphate. It participates in carbohydrate degradation; 2-deoxy-D-ribose 1-phosphate degradation; D-glyceraldehyde 3-phosphate and acetaldehyde from 2-deoxy-alpha-D-ribose 1-phosphate: step 1/2. Functionally, isomerase that catalyzes the conversion of deoxy-ribose 1-phosphate (dRib-1-P) and ribose 1-phosphate (Rib-1-P) to deoxy-ribose 5-phosphate (dRib-5-P) and ribose 5-phosphate (Rib-5-P), respectively. This chain is Phosphopentomutase, found in Streptococcus equi subsp. zooepidemicus (strain H70).